Reading from the N-terminus, the 717-residue chain is Polyribonucleotide nucleotidyltransferase (717 aa).

The Mg(2+) site is built by Asp-486 and Asp-492. In terms of domain architecture, KH spans 553–612 (PKIIQLQIDIDKISLVIGSTGKTVKAITDEFEVRVQIEQDGRITLFGTDSLKMQKAKARI). The 94-residue stretch at 622-715 (GEIYEGVVKK…KFGKIELELV (94 aa)) folds into the S1 motif domain. The interval 650-683 (SNRPKSRDDRYGDMRHSRYGSGRHSRYGRDSRNT) is disordered. Basic and acidic residues predominate over residues 654–665 (KSRDDRYGDMRH). Residues 666–675 (SRYGSGRHSR) are compositionally biased toward basic residues.

Belongs to the polyribonucleotide nucleotidyltransferase family. Requires Mg(2+) as cofactor.

The protein localises to the cytoplasm. The catalysed reaction is RNA(n+1) + phosphate = RNA(n) + a ribonucleoside 5'-diphosphate. Functionally, involved in mRNA degradation. Catalyzes the phosphorolysis of single-stranded polyribonucleotides processively in the 3'- to 5'-direction. This chain is Polyribonucleotide nucleotidyltransferase, found in Borrelia turicatae (strain 91E135).